Here is a 403-residue protein sequence, read N- to C-terminus: Tyrosine--tRNA ligase (403 aa).

A 'HIGH' region motif is present at residues 42–51; sequence PTAPDLHLGH. A 'KMSKS' region motif is present at residues 226 to 230; the sequence is KMSKS. Position 229 (lysine 229) interacts with ATP. Residues 339–400 form the S4 RNA-binding domain; sequence LRLAGLLTAA…GKRNFARVLL (62 aa).

Belongs to the class-I aminoacyl-tRNA synthetase family. TyrS type 2 subfamily. Homodimer.

It is found in the cytoplasm. It catalyses the reaction tRNA(Tyr) + L-tyrosine + ATP = L-tyrosyl-tRNA(Tyr) + AMP + diphosphate + H(+). Functionally, catalyzes the attachment of tyrosine to tRNA(Tyr) in a two-step reaction: tyrosine is first activated by ATP to form Tyr-AMP and then transferred to the acceptor end of tRNA(Tyr). This is Tyrosine--tRNA ligase from Xanthomonas euvesicatoria pv. vesicatoria (strain 85-10) (Xanthomonas campestris pv. vesicatoria).